Consider the following 208-residue polypeptide: Small ribosomal subunit protein uS5 (208 aa).

In terms of domain architecture, S5 DRBM spans 28 to 91 (LEERLIYANR…EKAKKNVIRV (64 aa)).

It belongs to the universal ribosomal protein uS5 family. Part of the 30S ribosomal subunit. Contacts proteins S4 and S8.

Functionally, with S4 and S12 plays an important role in translational accuracy. Its function is as follows. Located at the back of the 30S subunit body where it stabilizes the conformation of the head with respect to the body. This is Small ribosomal subunit protein uS5 from Aquifex aeolicus (strain VF5).